Here is a 354-residue protein sequence, read N- to C-terminus: CCN family member 3 (354 aa).

An N-terminal signal peptide occupies residues 1 to 21; sequence MSLFLRKRCLCLGFLLFHLLS. Positions 25–99 constitute an IGFBP N-terminal domain; the sequence is ASLRCPSRCP…NNQTGICMVP (75 aa). Intrachain disulfides connect Cys29-Cys55, Cys33-Cys57, Cys37-Cys58, Cys44-Cys61, Cys69-Cys83, and Cys75-Cys96. Residue Asn91 is glycosylated (N-linked (GlcNAc...) asparagine). The VWFC domain maps to 102 to 168; that stretch reads DNCVFDGVIY…GECCEKWTCG (67 aa). Residues 202 to 247 form the TSP type-1 domain; it reads NCIEQTTEWSACSKSCGMGVSTRVTNRNRQCEMVKQTRLCIVRPCE. A lipid anchor (S-palmitoyl cysteine) is attached at Cys241. Disulfide bonds link Cys261-Cys298, Cys278-Cys312, Cys289-Cys328, Cys292-Cys330, and Cys297-Cys334. Residues 261 to 335 enclose the CTCK domain; it reads CLRTKKSLKA…GTCTCYSNCP (75 aa). A glycan (N-linked (GlcNAc...) asparagine) is linked at Asn277.

Belongs to the CCN family. Interacts with FBLN1. Interacts (via CTCK domain) with NOTCH1 (via the EGF-like repeat region). Interacts with GJA1/CX43. Interacts with ITGA5:ITGB1, ITGAV:ITGB3 and ITGAV:ITGB5. Interacts with ZDHHC22; the interaction may lead to CCN3 palmitoylation. Post-translationally, may be palmitoylated on Cys-241, which is important for extracellular secretion. Expressed in large vessels including the ascending aorta, carotid arteries, and the thoracic aorta, in medium-sized vessels such as coronary arteries and small pulmonary veins and also in small vessels. In addition, also found to be present in the heart (at protein level). Expressed in astrocytes (at protein level). Detected in brain, bone, lung and muscle tissues. Expressed in skin, expression highly increases 5 days post-wounding, peaking on the 7th day to decline after 9 days. Expressed in pancreatic ducts and beta-cell islets. Expressed in the brain, in arcuate nucleus ESR1/KISS1 neurons, during lactation (at protein level).

It is found in the secreted. Its subcellular location is the cytoplasm. The protein localises to the cell junction. The protein resides in the gap junction. Functionally, immediate-early protein playing a role in various cellular processes including proliferation, adhesion, migration, differentiation and survival. Acts by binding to integrins or membrane receptors such as NOTCH1. Essential regulator of hematopoietic stem and progenitor cell function. Inhibits myogenic differentiation through the activation of Notch-signaling pathway. Inhibits vascular smooth muscle cells proliferation by increasing expression of cell-cycle regulators such as CDKN2B or CDKN1A independently of TGFB1 signaling. Ligand of integrins ITGAV:ITGB3 and ITGA5:ITGB1, acts directly upon endothelial cells to stimulate pro-angiogenic activities and induces angiogenesis. In endothelial cells, supports cell adhesion, induces directed cell migration (chemotaxis) and promotes cell survival. Also plays a role in cutaneous wound healing acting as integrin receptor ligand. Supports skin fibroblast adhesion through ITGA5:ITGB1 and ITGA6:ITGB1 and induces fibroblast chemotaxis through ITGAV:ITGB5. Seems to enhance bFGF-induced DNA synthesis in fibroblasts. Involved in bone regeneration as a negative regulator. Enhances the articular chondrocytic phenotype, whereas it repressed the one representing endochondral ossification. Impairs pancreatic beta-cell function, inhibits beta-cell proliferation and insulin secretion. Plays a role as negative regulator of endothelial pro-inflammatory activation reducing monocyte adhesion, its anti-inflammatory effects occur secondary to the inhibition of NF-kappaB signaling pathway. Contributes to the control and coordination of inflammatory processes in atherosclerosis. Attenuates inflammatory pain through regulation of IL1B- and TNF-induced MMP9, MMP2 and CCL2 expression. Inhibits MMP9 expression through ITGB1 engagement. Brain osteoanabolic hormone. During lactation, maintains the maternal skeleton and viability of offspring. In this context, may act on osteochondral skeletal stem cells. This Mus musculus (Mouse) protein is CCN family member 3 (Ccn3).